Reading from the N-terminus, the 237-residue chain is DNA repair protein RecO (237 aa).

This sequence belongs to the RecO family.

Involved in DNA repair and RecF pathway recombination. This chain is DNA repair protein RecO, found in Rickettsia peacockii (strain Rustic).